A 216-amino-acid chain; its full sequence is Redox-sensing transcriptional repressor Rex 1 (216 aa).

The segment at residues leucine 16–phenylalanine 55 is a DNA-binding region (H-T-H motif). An NAD(+)-binding site is contributed by glycine 90–glycine 95.

The protein belongs to the transcriptional regulatory Rex family. As to quaternary structure, homodimer.

The protein localises to the cytoplasm. Functionally, modulates transcription in response to changes in cellular NADH/NAD(+) redox state. The sequence is that of Redox-sensing transcriptional repressor Rex 1 from Enterococcus faecalis (strain ATCC 700802 / V583).